The primary structure comprises 472 residues: Glutamate synthase [NADPH] small chain (472 aa).

The region spanning 38 to 69 (GQAKAQADRCLSCGNPYCEWKCPVHNYIPNWL) is the 4Fe-4S ferredoxin-type domain. Positions 47, 50, 55, and 59 each coordinate [4Fe-4S] cluster.

Aggregate of 4 catalytic active heterodimers, consisting of a large and a small subunit. It depends on [4Fe-4S] cluster as a cofactor.

The catalysed reaction is 2 L-glutamate + NADP(+) = L-glutamine + 2-oxoglutarate + NADPH + H(+). It participates in amino-acid biosynthesis; L-glutamate biosynthesis via GLT pathway; L-glutamate from 2-oxoglutarate and L-glutamine (NADP(+) route): step 1/1. It functions in the pathway energy metabolism; nitrogen metabolism. Catalyzes the conversion of L-glutamine and 2-oxoglutarate into two molecules of L-glutamate. In Escherichia coli (strain K12), this protein is Glutamate synthase [NADPH] small chain (gltD).